The primary structure comprises 151 residues: Macrodomain Ter protein (151 aa).

This sequence belongs to the MatP family. In terms of assembly, homodimer.

The protein resides in the cytoplasm. Its function is as follows. Required for spatial organization of the terminus region of the chromosome (Ter macrodomain) during the cell cycle. Prevents early segregation of duplicated Ter macrodomains during cell division. Binds specifically to matS, which is a 13 bp signature motif repeated within the Ter macrodomain. The chain is Macrodomain Ter protein from Enterobacter sp. (strain 638).